The sequence spans 385 residues: Lipid-A-disaccharide synthase (385 aa).

It belongs to the LpxB family.

The enzyme catalyses a lipid X + a UDP-2-N,3-O-bis[(3R)-3-hydroxyacyl]-alpha-D-glucosamine = a lipid A disaccharide + UDP + H(+). It participates in bacterial outer membrane biogenesis; LPS lipid A biosynthesis. Functionally, condensation of UDP-2,3-diacylglucosamine and 2,3-diacylglucosamine-1-phosphate to form lipid A disaccharide, a precursor of lipid A, a phosphorylated glycolipid that anchors the lipopolysaccharide to the outer membrane of the cell. This Xylella fastidiosa (strain M23) protein is Lipid-A-disaccharide synthase.